A 120-amino-acid chain; its full sequence is Large ribosomal subunit protein bL19c (120 aa).

Belongs to the bacterial ribosomal protein bL19 family.

The protein localises to the plastid. The protein resides in the chloroplast. This is Large ribosomal subunit protein bL19c from Thalassiosira pseudonana (Marine diatom).